A 200-amino-acid chain; its full sequence is Coiled-coil domain-containing protein 28B (200 aa).

N-acetylmethionine is present on Met1. Over residues 1-10 (MDDKKKKRSP) the composition is skewed to basic residues. Residues 1 to 49 (MDDKKKKRSPKPCLAQPAQAPGTLRRVPVPTSHSGSLALGLPHLPSPKQ) are disordered. Phosphoserine is present on residues Ser46 and Ser115. Acidic residues predominate over residues 141–152 (EEEDDEEEEDGV). The segment at 141–164 (EEEDDEEEEDGVTEGLPEEQKKTM) is disordered. Residues 158–183 (EEQKKTMADRNLDQLLSNLEDLSNSI) are a coiled coil.

As to quaternary structure, interacts with BBS1, BBS2, BBS4, BBS5, BBS6, BBS7 and TTC8/BBS8. Interacts with MAPKAP1/SIN1 isoform 1 and RICTOR.

It localises to the cytoplasm. The protein localises to the cytoskeleton. The protein resides in the microtubule organizing center. Its subcellular location is the centrosome. Involved in ciliogenesis. Regulates cilia length through its interaction with MAPKAP1/SIN1 but independently of mTORC2 complex. Modulates mTORC2 complex assembly and function, possibly enhances AKT1 phosphorylation. Does not seem to modulate assembly and function of mTORC1 complex. This chain is Coiled-coil domain-containing protein 28B (CCDC28B), found in Homo sapiens (Human).